We begin with the raw amino-acid sequence, 272 residues long: MSPIIASEHLSNIALGYVDSVDSEYAKRLAKKWQFNYLGHVAAASKQPKLEFMLQMHHHALELCKLDEPKLGAIKVDFVEGAVAHRRKFGGGRGQDIAKAVGLKHGFKPHVLDATAGLGRDAFVLASLGCKLTLLERMPVVAALLDDGIERAKLNHEVADIANNMQLIHGSSLEEVDLAIEPDVVYLDPMYPHREKSAAVKKEMRIFQSLVGEDLDADDLLEPALALAKYRVVVKRPSYAPPLANKKPSMSINMKKNRFDVYVKQAIPKPIT.

Residues 120-121, 136-137, 171-172, and Asp-188 each bind S-adenosyl-L-methionine; these read RD, ER, and SS.

The protein belongs to the methyltransferase superfamily. RsmJ family.

It localises to the cytoplasm. The catalysed reaction is guanosine(1516) in 16S rRNA + S-adenosyl-L-methionine = N(2)-methylguanosine(1516) in 16S rRNA + S-adenosyl-L-homocysteine + H(+). Specifically methylates the guanosine in position 1516 of 16S rRNA. In Colwellia psychrerythraea (strain 34H / ATCC BAA-681) (Vibrio psychroerythus), this protein is Ribosomal RNA small subunit methyltransferase J.